Reading from the N-terminus, the 595-residue chain is UvrABC system protein C (595 aa).

The region spanning 14–91 is the GIY-YIG domain; sequence DSPGCYIHKD…IQENKPKYNI (78 aa). The 36-residue stretch at 196–231 folds into the UVR domain; sequence DKIVNELRDKMTKASELMEFERAAEYRDLIEGIGLL.

This sequence belongs to the UvrC family. Interacts with UvrB in an incision complex.

Its subcellular location is the cytoplasm. In terms of biological role, the UvrABC repair system catalyzes the recognition and processing of DNA lesions. UvrC both incises the 5' and 3' sides of the lesion. The N-terminal half is responsible for the 3' incision and the C-terminal half is responsible for the 5' incision. The polypeptide is UvrABC system protein C (Streptococcus mutans serotype c (strain ATCC 700610 / UA159)).